The following is a 248-amino-acid chain: Tetraspanin-17 (248 aa).

Over 1 to 7 (MSEVRTG) the chain is Cytoplasmic. The chain crosses the membrane as a helical span at residues 8-28 (FLTMTTIILISIGLTMMGTGL). At 29-44 (YQKTTMSSCIRETSSQ) the chain is on the extracellular side. The chain crosses the membrane as a helical span at residues 45–65 (FTLLGLLLLLIPQIGLYGICC). Over 66-69 (RSKR) the chain is Cytoplasmic. The helical transmembrane segment at 70–90 (LFNFFFYGMVVLIIIVSYYSI) threads the bilayer. Residues 91-210 (KCSIYNTTFG…ILKAIVHQWK (120 aa)) lie on the Extracellular side of the membrane. N-linked (GlcNAc...) asparagine glycosylation is found at Asn-96, Asn-109, and Asn-141. The helical transmembrane segment at 211–231 (YLSMFAYPALVLSCISLAIAW) threads the bilayer. At 232–248 (SLKETIHENEDYRGSYS) the chain is on the cytoplasmic side.

This sequence belongs to the tetraspanin (TM4SF) family.

It is found in the membrane. In terms of biological role, may be involved in the regulation of cell differentiation. The sequence is that of Tetraspanin-17 (TET17) from Arabidopsis thaliana (Mouse-ear cress).